A 140-amino-acid chain; its full sequence is Ribosomal RNA large subunit methyltransferase H (140 aa).

S-adenosyl-L-methionine-binding positions include Leu58, Gly90, and 108–113; that span reads LSLLTF.

This sequence belongs to the RNA methyltransferase RlmH family. As to quaternary structure, homodimer.

The protein localises to the cytoplasm. The enzyme catalyses pseudouridine(1915) in 23S rRNA + S-adenosyl-L-methionine = N(3)-methylpseudouridine(1915) in 23S rRNA + S-adenosyl-L-homocysteine + H(+). Its function is as follows. Specifically methylates the pseudouridine at position 1915 (m3Psi1915) in 23S rRNA. This Protochlamydia amoebophila (strain UWE25) protein is Ribosomal RNA large subunit methyltransferase H.